The primary structure comprises 500 residues: Tyrosine decarboxylase 2 (500 aa).

Tandem repeats lie at residues 65–122 (EDIR…TELE) and 125–176 (VLDW…GKRS). A 2 X approximate tandem repeats region spans residues 65 to 176 (EDIRQKIVPG…KFLNRFGKRS (112 aa)). Ser-89 lines the substrate pocket. 2 residues coordinate pyridoxal 5'-phosphate: Ala-153 and Ser-154. His-189 contributes to the substrate binding site. Residues Thr-248 and Asn-302 each coordinate pyridoxal 5'-phosphate. Lys-305 carries the N6-(pyridoxal phosphate)lysine modification.

It belongs to the group II decarboxylase family. Pyridoxal 5'-phosphate is required as a cofactor. As to expression, mostly expressed in bulbs, and, to a lower extent, in stems, roots, leaves and flowers.

It carries out the reaction L-tyrosine + H(+) = tyramine + CO2. It participates in alkaloid biosynthesis. Functionally, catalyzes the decarboxylation of L-tyrosine to tyramine, which is converted to norbelladine, a precursor to all Amaryllidaceae alkaloids such as galanthamine, lycorine and haemanthamine, and including haemanthamine- and crinamine-type alkaloids, promising anticancer agents. This chain is Tyrosine decarboxylase 2, found in Narcissus pseudonarcissus (Daffodil).